Reading from the N-terminus, the 78-residue chain is uncharacterized protein (78 aa).

A disordered region spans residues 1–28; that stretch reads MQANHSVSYLYESSTSKRSNGLFSQTQK.

This is an uncharacterized protein from Saccharomyces cerevisiae (strain ATCC 204508 / S288c) (Baker's yeast).